The chain runs to 1002 residues: Transposase for transposon gamma-delta (1002 aa).

It belongs to the transposase 7 family.

Functionally, required for transposition of transposon Tn1000. The polypeptide is Transposase for transposon gamma-delta (tnpA) (Escherichia coli (strain K12)).